We begin with the raw amino-acid sequence, 206 residues long: RNA-free ribonuclease P (206 aa).

A disordered region spans residues Asn-187–Gly-206. Over residues His-195–Gly-206 the composition is skewed to pro residues.

Belongs to the HARP family.

It carries out the reaction Endonucleolytic cleavage of RNA, removing 5'-extranucleotides from tRNA precursor.. Its function is as follows. RNA-free RNase P that catalyzes the removal of the 5'-leader sequence from pre-tRNA to produce the mature 5'-terminus. The protein is RNA-free ribonuclease P of Halorhodospira halophila (strain DSM 244 / SL1) (Ectothiorhodospira halophila (strain DSM 244 / SL1)).